The primary structure comprises 578 residues: Leucine-rich repeat-containing protein 15 (578 aa).

The N-terminal stretch at 1-21 (MPLKHYLLLLVGCQAWALGLA) is a signal peptide. The region spanning 22–53 (YYGCPSECTCSRASQVECTGARIVAMPTPLPW) is the LRRNT domain. Topologically, residues 22-535 (YYGCPSECTC…TWGMTEAQSG (514 aa)) are extracellular. LRR repeat units follow at residues 54-75 (NAMS…LFLN), 78-99 (ALIA…AFRN), 102-123 (SLRY…VFQD), 126-147 (NLES…QFSQ), 150-171 (NLRE…AFDH), 174-195 (GLTK…LFQH), 198-219 (NLQV…TFDA), 222-243 (NLQE…LFHN), 246-267 (NLQR…IFMQ), 270-291 (QLNK…VFGP), 294-315 (NLRE…TFSH), 318-339 (QLQV…AFNG), 342-363 (NLRE…VFRS), 366-387 (NLQN…IFAN), and 390-411 (GLTT…IFDH). Residue Asn-75 is glycosylated (N-linked (GlcNAc...) asparagine). The N-linked (GlcNAc...) asparagine glycan is linked to Asn-369. The LRRCT domain occupies 423-473 (NPWRCDSDILPLHNWLLLNRARLGTDTLPVCSSPANVRGQSLVIININFPG). The disordered stretch occupies residues 476–500 (VQGPETPEVPSYPDTPSYPDTTSVS). Residues 536–556 (LAIAAIVIGIIALACSLAACI) traverse the membrane as a helical segment. Topologically, residues 557-578 (CCCCCKKRSQAVLMQMKAPNEC) are cytoplasmic.

It localises to the cell membrane. This Rattus norvegicus (Rat) protein is Leucine-rich repeat-containing protein 15 (Lrrc15).